We begin with the raw amino-acid sequence, 119 residues long: MNKEQILEAIKAMTVLELNDLVKAIEEEFGVTAAAPVAVVAGGAAAAEEKTEFDVVLASAGAEKIKVIKVVREITGLGLKEAKEVVDNAPKALKEGVSKDEAEEIKTKLEEVGASVEVK.

This sequence belongs to the bacterial ribosomal protein bL12 family. Homodimer. Part of the ribosomal stalk of the 50S ribosomal subunit. Forms a multimeric L10(L12)X complex, where L10 forms an elongated spine to which 2 to 4 L12 dimers bind in a sequential fashion. Binds GTP-bound translation factors.

In terms of biological role, forms part of the ribosomal stalk which helps the ribosome interact with GTP-bound translation factors. Is thus essential for accurate translation. The sequence is that of Large ribosomal subunit protein bL12 from Lysinibacillus sphaericus (strain C3-41).